The following is a 116-amino-acid chain: Large ribosomal subunit protein bL19 (116 aa).

Belongs to the bacterial ribosomal protein bL19 family.

Its function is as follows. This protein is located at the 30S-50S ribosomal subunit interface and may play a role in the structure and function of the aminoacyl-tRNA binding site. The polypeptide is Large ribosomal subunit protein bL19 (Pseudomonas fluorescens (strain ATCC BAA-477 / NRRL B-23932 / Pf-5)).